The chain runs to 935 residues: UvrABC system protein A (935 aa).

31 to 38 (GLSGSGKS) lines the ATP pocket. The segment at 254-281 (CFKCKMSFEELEPLSFSFNSPKGACESC) adopts a C4-type zinc-finger fold. 2 ABC transporter domains span residues 310–579 (IFGY…NNHS) and 599–931 (KEKH…KFLA). 631–638 (GVSGSGKS) serves as a coordination point for ATP. The C4-type zinc-finger motif lies at 731–757 (CEKCQGDGDIKIEMHFLPDVLVQCDSC).

Belongs to the ABC transporter superfamily. UvrA family. In terms of assembly, forms a heterotetramer with UvrB during the search for lesions.

The protein localises to the cytoplasm. Its function is as follows. The UvrABC repair system catalyzes the recognition and processing of DNA lesions. UvrA is an ATPase and a DNA-binding protein. A damage recognition complex composed of 2 UvrA and 2 UvrB subunits scans DNA for abnormalities. When the presence of a lesion has been verified by UvrB, the UvrA molecules dissociate. The protein is UvrABC system protein A of Helicobacter pylori (strain ATCC 700392 / 26695) (Campylobacter pylori).